We begin with the raw amino-acid sequence, 365 residues long: Protein YIM1 (365 aa).

This sequence belongs to the YIM1 family.

The protein resides in the lipid droplet. Its subcellular location is the mitochondrion. This chain is Protein YIM1 (YIM1), found in Saccharomyces cerevisiae (strain ATCC 204508 / S288c) (Baker's yeast).